The primary structure comprises 268 residues: Imidazole glycerol phosphate synthase subunit HisF (268 aa).

Active-site residues include D12 and D131.

It belongs to the HisA/HisF family. In terms of assembly, heterodimer of HisH and HisF.

Its subcellular location is the cytoplasm. The enzyme catalyses 5-[(5-phospho-1-deoxy-D-ribulos-1-ylimino)methylamino]-1-(5-phospho-beta-D-ribosyl)imidazole-4-carboxamide + L-glutamine = D-erythro-1-(imidazol-4-yl)glycerol 3-phosphate + 5-amino-1-(5-phospho-beta-D-ribosyl)imidazole-4-carboxamide + L-glutamate + H(+). The protein operates within amino-acid biosynthesis; L-histidine biosynthesis; L-histidine from 5-phospho-alpha-D-ribose 1-diphosphate: step 5/9. In terms of biological role, IGPS catalyzes the conversion of PRFAR and glutamine to IGP, AICAR and glutamate. The HisF subunit catalyzes the cyclization activity that produces IGP and AICAR from PRFAR using the ammonia provided by the HisH subunit. This chain is Imidazole glycerol phosphate synthase subunit HisF, found in Chelativorans sp. (strain BNC1).